The sequence spans 1296 residues: DNA-directed RNA polymerase subunit beta' (1296 aa).

Zn(2+) contacts are provided by Cys-60, Cys-62, Cys-75, and Cys-78. The segment at 188-209 is disordered; it reads GAKGDARRKVRESAEREMRQIR. Residues Asp-535, Asp-537, and Asp-539 each contribute to the Mg(2+) site. Zn(2+) is bound by residues Cys-877, Cys-954, Cys-961, and Cys-964.

It belongs to the RNA polymerase beta' chain family. The RNAP catalytic core consists of 2 alpha, 1 beta, 1 beta' and 1 omega subunit. When a sigma factor is associated with the core the holoenzyme is formed, which can initiate transcription. Mg(2+) is required as a cofactor. It depends on Zn(2+) as a cofactor.

The enzyme catalyses RNA(n) + a ribonucleoside 5'-triphosphate = RNA(n+1) + diphosphate. Functionally, DNA-dependent RNA polymerase catalyzes the transcription of DNA into RNA using the four ribonucleoside triphosphates as substrates. This is DNA-directed RNA polymerase subunit beta' from Parafrankia sp. (strain EAN1pec).